Consider the following 683-residue polypeptide: ATP-dependent zinc metalloprotease FtsH (683 aa).

The interval 1–43 is disordered; it reads MEDKNIKDDEILDDQNDNQEDVQNQDEEKEIKPKKPKKKVYIS. The Cytoplasmic portion of the chain corresponds to 1 to 70; it reads MEDKNIKDDE…KNNNISFRVK (70 aa). A compositionally biased stretch (acidic residues) spans 10 to 28; it reads EILDDQNDNQEDVQNQDEE. A helical transmembrane segment spans residues 71–91; that stretch reads PPIFFFLILILMSTLFYFYGN. Residues 92 to 174 are Periplasmic-facing; it reads KTALFQEKRE…IVVLGTPVSS (83 aa). The chain crosses the membrane as a helical span at residues 175 to 195; the sequence is IITRAIFSFAPLFMLLFFFYF. The Cytoplasmic portion of the chain corresponds to 196-683; that stretch reads INKKMMGSSG…LDDEQLEKYY (488 aa). 270-277 contributes to the ATP binding site; sequence GEPGTGKT. Zn(2+) is bound at residue His494. Residue Glu495 is part of the active site. Positions 498 and 569 each coordinate Zn(2+).

It in the central section; belongs to the AAA ATPase family. In the C-terminal section; belongs to the peptidase M41 family. As to quaternary structure, homohexamer. Zn(2+) serves as cofactor.

It localises to the cell inner membrane. Acts as a processive, ATP-dependent zinc metallopeptidase for both cytoplasmic and membrane proteins. Plays a role in the quality control of integral membrane proteins. This is ATP-dependent zinc metalloprotease FtsH from Streptobacillus moniliformis (strain ATCC 14647 / DSM 12112 / NCTC 10651 / 9901).